The sequence spans 255 residues: Hydroxyacylglutathione hydrolase (255 aa).

Zn(2+) contacts are provided by H56, H58, D60, H61, H114, D133, and H171.

This sequence belongs to the metallo-beta-lactamase superfamily. Glyoxalase II family. As to quaternary structure, monomer. Zn(2+) serves as cofactor.

It carries out the reaction an S-(2-hydroxyacyl)glutathione + H2O = a 2-hydroxy carboxylate + glutathione + H(+). It participates in secondary metabolite metabolism; methylglyoxal degradation; (R)-lactate from methylglyoxal: step 2/2. Its function is as follows. Thiolesterase that catalyzes the hydrolysis of S-D-lactoyl-glutathione to form glutathione and D-lactic acid. The chain is Hydroxyacylglutathione hydrolase from Cereibacter sphaeroides (strain ATCC 17023 / DSM 158 / JCM 6121 / CCUG 31486 / LMG 2827 / NBRC 12203 / NCIMB 8253 / ATH 2.4.1.) (Rhodobacter sphaeroides).